We begin with the raw amino-acid sequence, 555 residues long: Wee1-like protein kinase 2-A (555 aa).

Disordered stretches follow at residues 1–81 (MRTA…SVGA) and 149–175 (FTPESYRQTHFQPNGKRKERPEDDCRT). Residues 38-48 (SPVSSWRTNNC) are compositionally biased toward polar residues. The segment covering 68–78 (SPSSDYSPDPS) has biased composition (low complexity). Polar residues predominate over residues 149–160 (FTPESYRQTHFQ). A Protein kinase domain is found at 210–480 (FLEIEKIGAG…AASLAKNSVL (271 aa)). ATP is bound by residues 216-224 (IGAGEFGSV) and K239. D337 functions as the Proton acceptor in the catalytic mechanism. Mg(2+) contacts are provided by N342 and D374. The stretch at 487-513 (AAQLQKQLNVEKFKTAMLERELKAAKL) forms a coiled coil. Position 549 is a phosphoserine (S549).

It belongs to the protein kinase superfamily. Ser/Thr protein kinase family. WEE1 subfamily. In terms of assembly, interacts with prmt5; this promotes protesomal degradation of wee2-a in the nucleus. The interaction with prmt5 is disrupted upon activation of the DNA replication checkpoint. Subject to proteasomal degradation in the nucleus. In terms of tissue distribution, detected in egg (at protein level). Oocyte-specific maternally supplied protein. Present in immature and mature oocytes and in early (pregastrula) embryos, but not in post-gastrula embryos.

The protein localises to the nucleus. The protein resides in the cytoplasm. Its subcellular location is the cytosol. It catalyses the reaction L-tyrosyl-[protein] + ATP = O-phospho-L-tyrosyl-[protein] + ADP + H(+). Its function is as follows. Oocyte-specific protein tyrosine kinase that phosphorylates and inhibits cdk1 and acts as a key regulator of meiosis. Required to maintain meiotic arrest in oocytes by phosphorylating cdk1 at 'Tyr-15', which inhibits cdk1 activity and prevents meiotic reentry. Negative regulator of mitosis. Involved in the mitotic DNA replication checkpoint. The polypeptide is Wee1-like protein kinase 2-A (wee2-a) (Xenopus laevis (African clawed frog)).